We begin with the raw amino-acid sequence, 191 residues long: Protein UL140 (191 aa).

The chain crosses the membrane as a helical span at residues 28–48; the sequence is TLVVFGFIVTLLFFLFMLYFW.

It is found in the host membrane. The chain is Protein UL140 (UL140) from Homo sapiens (Human).